Here is a 464-residue protein sequence, read N- to C-terminus: Chromosomal replication initiator protein DnaA (464 aa).

The segment at 1-90 (MNNDNTEVLE…KYWQDEDQSI (90 aa)) is domain I, interacts with DnaA modulators. A domain II region spans residues 90 to 126 (ICSVDICVVSNQDPNLLVDIKDRVDRGIKGNCDNVSS). Residues 127–345 (PLDPRFTFDN…GALNKVVAHS (219 aa)) form a domain III, AAA+ region region. The ATP site is built by Gly-173, Gly-175, Lys-176, and Thr-177. The domain IV, binds dsDNA stretch occupies residues 346–464 (SLVGCSITLD…DINLLNRMLR (119 aa)).

This sequence belongs to the DnaA family. In terms of assembly, oligomerizes as a right-handed, spiral filament on DNA at oriC.

It is found in the cytoplasm. In terms of biological role, plays an essential role in the initiation and regulation of chromosomal replication. ATP-DnaA binds to the origin of replication (oriC) to initiate formation of the DNA replication initiation complex once per cell cycle. Binds the DnaA box (a 9 base pair repeat at the origin) and separates the double-stranded (ds)DNA. Forms a right-handed helical filament on oriC DNA; dsDNA binds to the exterior of the filament while single-stranded (ss)DNA is stabiized in the filament's interior. The ATP-DnaA-oriC complex binds and stabilizes one strand of the AT-rich DNA unwinding element (DUE), permitting loading of DNA polymerase. After initiation quickly degrades to an ADP-DnaA complex that is not apt for DNA replication. Binds acidic phospholipids. This chain is Chromosomal replication initiator protein DnaA, found in Ehrlichia ruminantium (strain Gardel).